The chain runs to 1019 residues: Probable inorganic carbon transporter subunit DabA 1 (1019 aa).

Positions 491 and 493 each coordinate Zn(2+). Positions V624–Q643 are disordered. Positions 676 and 691 each coordinate Zn(2+).

Belongs to the inorganic carbon transporter (TC 9.A.2) DabA family. Forms a complex with DabB. Zn(2+) is required as a cofactor.

It localises to the cell inner membrane. Functionally, part of an energy-coupled inorganic carbon pump. This is Probable inorganic carbon transporter subunit DabA 1 from Sorangium cellulosum (strain So ce56) (Polyangium cellulosum (strain So ce56)).